Consider the following 168-residue polypeptide: Cell division inhibitor SulA (168 aa).

The interval 105 to 111 is ftsZ binding; that stretch reads ALQTGNY.

The protein belongs to the SulA family. Interacts with FtsZ. Is rapidly cleaved and degraded by the Lon protease once DNA damage is repaired.

In terms of biological role, component of the SOS system and an inhibitor of cell division. Accumulation of SulA causes rapid cessation of cell division and the appearance of long, non-septate filaments. In the presence of GTP, binds a polymerization-competent form of FtsZ in a 1:1 ratio, thus inhibiting FtsZ polymerization and therefore preventing it from participating in the assembly of the Z ring. This mechanism prevents the premature segregation of damaged DNA to daughter cells during cell division. The protein is Cell division inhibitor SulA of Erwinia pyrifoliae (strain DSM 12163 / CIP 106111 / Ep16/96).